The chain runs to 489 residues: Cobyric acid synthase (489 aa).

In terms of domain architecture, GATase cobBQ-type spans 252-441 (ALTIGVIQLP…IHGIFANTEF (190 aa)). C330 acts as the Nucleophile in catalysis. The active site involves H433.

The protein belongs to the CobB/CobQ family. CobQ subfamily.

It functions in the pathway cofactor biosynthesis; adenosylcobalamin biosynthesis. Its function is as follows. Catalyzes amidations at positions B, D, E, and G on adenosylcobyrinic A,C-diamide. NH(2) groups are provided by glutamine, and one molecule of ATP is hydrogenolyzed for each amidation. The sequence is that of Cobyric acid synthase from Herpetosiphon aurantiacus (strain ATCC 23779 / DSM 785 / 114-95).